The primary structure comprises 166 residues: Bacterial non-heme ferritin (166 aa).

A Ferritin-like diiron domain is found at 2-145 (LSKNLLEALN…THINYLTRIG (144 aa)). Glu17, Glu50, His53, Glu94, and Gln127 together coordinate Fe cation.

This sequence belongs to the ferritin family. Prokaryotic subfamily.

The protein resides in the cytoplasm. The catalysed reaction is 4 Fe(2+) + O2 + 6 H2O = 4 iron(III) oxide-hydroxide + 12 H(+). Its function is as follows. Iron-storage protein. This Staphylococcus aureus (strain USA300) protein is Bacterial non-heme ferritin (ftnA).